We begin with the raw amino-acid sequence, 216 residues long: Redox-sensing transcriptional repressor Rex (216 aa).

The H-T-H motif DNA-binding region spans 20 to 59 (QYYRLFKSLVEENVTRTNSQLISEKIGVDAATIRRDFSLF). 94 to 99 (GVGNLG) contacts NAD(+).

Belongs to the transcriptional regulatory Rex family. In terms of assembly, homodimer.

It localises to the cytoplasm. Modulates transcription in response to changes in cellular NADH/NAD(+) redox state. The sequence is that of Redox-sensing transcriptional repressor Rex from Lactococcus lactis subsp. cremoris (strain SK11).